Consider the following 172-residue polypeptide: Lipoprotein signal peptidase (172 aa).

Transmembrane regions (helical) follow at residues 12–32 (TSAA…VILF), 43–63 (VFAY…LVYN), 77–97 (WQRW…CYLL), and 102–122 (GQKM…GNVI). Residues Asp132 and Asp150 contribute to the active site. The helical transmembrane segment at 142–162 (HWPAFNLADSAITVGAVLLVL) threads the bilayer.

It belongs to the peptidase A8 family.

It localises to the cell inner membrane. It catalyses the reaction Release of signal peptides from bacterial membrane prolipoproteins. Hydrolyzes -Xaa-Yaa-Zaa-|-(S,diacylglyceryl)Cys-, in which Xaa is hydrophobic (preferably Leu), and Yaa (Ala or Ser) and Zaa (Gly or Ala) have small, neutral side chains.. It functions in the pathway protein modification; lipoprotein biosynthesis (signal peptide cleavage). Functionally, this protein specifically catalyzes the removal of signal peptides from prolipoproteins. In Paraburkholderia phytofirmans (strain DSM 17436 / LMG 22146 / PsJN) (Burkholderia phytofirmans), this protein is Lipoprotein signal peptidase.